We begin with the raw amino-acid sequence, 320 residues long: o-succinylbenzoate synthase (320 aa).

The active-site Proton donor is lysine 133. Residues aspartate 161, glutamate 190, and aspartate 213 each contribute to the Mg(2+) site. Lysine 235 (proton acceptor) is an active-site residue.

This sequence belongs to the mandelate racemase/muconate lactonizing enzyme family. MenC type 1 subfamily. A divalent metal cation serves as cofactor.

It carries out the reaction (1R,6R)-6-hydroxy-2-succinyl-cyclohexa-2,4-diene-1-carboxylate = 2-succinylbenzoate + H2O. It functions in the pathway quinol/quinone metabolism; 1,4-dihydroxy-2-naphthoate biosynthesis; 1,4-dihydroxy-2-naphthoate from chorismate: step 4/7. The protein operates within quinol/quinone metabolism; menaquinone biosynthesis. Its function is as follows. Converts 2-succinyl-6-hydroxy-2,4-cyclohexadiene-1-carboxylate (SHCHC) to 2-succinylbenzoate (OSB). This chain is o-succinylbenzoate synthase, found in Salmonella paratyphi B (strain ATCC BAA-1250 / SPB7).